The primary structure comprises 273 residues: 4-hydroxy-tetrahydrodipicolinate reductase (273 aa).

Residues 12 to 17 (GAGGRM) and glutamate 38 each bind NAD(+). Arginine 39 provides a ligand contact to NADP(+). Residues 102 to 104 (GTT) and 126 to 129 (AANF) contribute to the NAD(+) site. Catalysis depends on histidine 159, which acts as the Proton donor/acceptor. Histidine 160 lines the (S)-2,3,4,5-tetrahydrodipicolinate pocket. The Proton donor role is filled by lysine 163. Position 169–170 (169–170 (GT)) interacts with (S)-2,3,4,5-tetrahydrodipicolinate.

The protein belongs to the DapB family. As to quaternary structure, homotetramer.

It is found in the cytoplasm. It carries out the reaction (S)-2,3,4,5-tetrahydrodipicolinate + NAD(+) + H2O = (2S,4S)-4-hydroxy-2,3,4,5-tetrahydrodipicolinate + NADH + H(+). The enzyme catalyses (S)-2,3,4,5-tetrahydrodipicolinate + NADP(+) + H2O = (2S,4S)-4-hydroxy-2,3,4,5-tetrahydrodipicolinate + NADPH + H(+). It participates in amino-acid biosynthesis; L-lysine biosynthesis via DAP pathway; (S)-tetrahydrodipicolinate from L-aspartate: step 4/4. Catalyzes the conversion of 4-hydroxy-tetrahydrodipicolinate (HTPA) to tetrahydrodipicolinate. This is 4-hydroxy-tetrahydrodipicolinate reductase from Shigella sonnei (strain Ss046).